The primary structure comprises 146 residues: Mitochondrial pyruvate carrier 3 (146 aa).

The N-terminal 20 residues, 1 to 20 (MSASAFNFAFRRFWNSETGP), are a transit peptide targeting the mitochondrion. 3 helical membrane-spanning segments follow: residues 23 to 39 (VHFW…FAGL), 55 to 71 (LSLL…SFVI), and 78 to 94 (LASV…YHLT).

The protein belongs to the mitochondrial pyruvate carrier (MPC) (TC 2.A.105) family. The functional 150 kDa pyruvate import complex is a heteromer of MPC1 and either MPC2 or MPC3.

It is found in the mitochondrion. The protein localises to the mitochondrion inner membrane. In terms of biological role, mediates the uptake of pyruvate into mitochondria. The sequence is that of Mitochondrial pyruvate carrier 3 from Saccharomyces cerevisiae (strain ATCC 204508 / S288c) (Baker's yeast).